We begin with the raw amino-acid sequence, 421 residues long: L-evernosamine nitrososynthase (421 aa).

The protein belongs to the acyl-CoA dehydrogenase family. In terms of assembly, homotetramer. Requires FAD as cofactor.

It carries out the reaction dTDP-beta-L-evernosamine + 2 NADPH + 2 O2 + H(+) = dTDP-2,3,6-trideoxy-3-C-methyl-4-O-methyl-3-nitroso-beta-L-arabino-hexopyranose + 2 NADP(+) + 3 H2O. It catalyses the reaction dTDP-beta-L-evernosamine + NADPH + O2 = dTDP-N-hydroxy-beta-L-evernosamine + NADP(+) + H2O. The catalysed reaction is dTDP-N-hydroxy-beta-L-evernosamine + NADPH + O2 + H(+) = dTDP-2,3,6-trideoxy-3-C-methyl-4-O-methyl-3-nitroso-beta-L-arabino-hexopyranose + NADP(+) + 2 H2O. It participates in antibiotic biosynthesis. In terms of biological role, nitrososynthase involved in the biosynthesis of everninomicin, a broad spectrum orthosomycin antibiotic. Catalyzes the double-oxidation of TDP-L-evernosamine to TDP-L-evernitrosose. The enzyme first oxidizes the substrate to a transient hydroxylamino intermediate, which is then further oxidized to nitroso sugar. The nitroso group is probably spontaneously oxidized giving TDP-L-evernitrose. In vitro, catalyzes the double-oxidation of TDP-L-epi-vancosamine to TDP-L-epi-vancosonitrose. Can also use biosynthetic progenitors of TDP-L-epi-vancosamine, but progenitors solely undergo single-oxidation reactions and terminate in the hydroxylamine oxidation state. The chain is L-evernosamine nitrososynthase from Micromonospora sp. (strain ATCC 39149 / NRRL 15099 / SCC 1413).